The following is a 169-amino-acid chain: Regulator of ribonuclease activity A (169 aa).

It belongs to the RraA family. In terms of assembly, homotrimer. Binds to both RNA-binding sites in the C-terminal region of Rne and to RhlB.

It is found in the cytoplasm. Functionally, globally modulates RNA abundance by binding to RNase E (Rne) and regulating its endonucleolytic activity. Can modulate Rne action in a substrate-dependent manner by altering the composition of the degradosome. Modulates RNA-binding and helicase activities of the degradosome. The sequence is that of Regulator of ribonuclease activity A from Photorhabdus laumondii subsp. laumondii (strain DSM 15139 / CIP 105565 / TT01) (Photorhabdus luminescens subsp. laumondii).